Reading from the N-terminus, the 714-residue chain is MATTTAECLTQETMDYHALNAMLNLYDSAGRIQFDKDRQAVDAFIATHVRPNSVTFSSQQQRLNWLVNEGYYDESVLNRYSRDFVITLFTHAHTSGFRFQTFLGAWKFYTSYTLKTFDGKRYLEDFADRVTMVALTLAQGDETLALQLTDEMLSGRFQPATPTFLNCGKQQRGELVSCFLLRIEDNMESIGRAVNSALQLSKRGGGVAFLLSNLREAGAPIKRIENQSSGVIPVMKMLEDAFSYANQLGARQGAGAVYLHAHHPDILRFLDTKRENADEKIRIKTLSLGVVIPDITFHLAKENAQMALFSPYDVERVYGKPFADVAISQHYDELVADERIRKKYLNARDFFQRLAEIQFESGYPYIMYEDTVNRANPIAGRINMSNLCSEILQVNSASEYDENLDYTRTGHDISCNLGSLNIAHTMDSPDFARTVETAVRGLTAVSDMSHIRSVPSIEAGNAASHAIGLGQMNLHGYLAREGIAYGSPEALDFTNLYFYAITWHALRTSMLLARERGETFAGFKQSRYASGEYFSQYLQGNWQPKTAKVGELFTRSGITLPTREMWAQLRDDVMRYGIYNQNLQAVPPTGSISYINHATSSIHPIVAKVEIRKEGKTGRVYYPAPFMTNENLALYQDAYEIGAEKIIDTYAEATRHVDQGLSLTLFFPDTATTRDINKAQIYAWRKGIKTLYYIRLRQMALEGTEIEGCVSCAL.

Substrate is bound by residues threonine 161, 177–178, glycine 206, 386–390, and 588–592; these read SC, NLCSE, and PTGSI. An intrachain disulfide couples cysteine 178 to cysteine 415. Catalysis depends on asparagine 386, which acts as the Proton acceptor. Residue cysteine 388 is the Cysteine radical intermediate of the active site. Glutamate 390 acts as the Proton acceptor in catalysis.

This sequence belongs to the ribonucleoside diphosphate reductase large chain family. In terms of assembly, tetramer of two alpha and two beta subunits.

It carries out the reaction a 2'-deoxyribonucleoside 5'-diphosphate + [thioredoxin]-disulfide + H2O = a ribonucleoside 5'-diphosphate + [thioredoxin]-dithiol. With respect to regulation, under complex allosteric control mediated by deoxynucleoside triphosphates and ATP binding. The type of nucleotide bound at the specificity site determines substrate preference. It seems probable that ATP makes the enzyme reduce CDP and UDP, dGTP favors ADP reduction and dTTP favors GDP reduction. In terms of biological role, provides the precursors necessary for DNA synthesis. Catalyzes the biosynthesis of deoxyribonucleotides from the corresponding ribonucleotides. R1E contains the binding sites for both substrates and allosteric effectors and carries out the actual reduction of the ribonucleotide. This Escherichia coli (strain K12) protein is Ribonucleoside-diphosphate reductase 2 subunit alpha (nrdE).